A 27-amino-acid polypeptide reads, in one-letter code: CPRILMKCKLDTDCFPTCTCRPSGFCG.

3 cysteine pairs are disulfide-bonded: C1–C18, C8–C20, and C14–C26.

It localises to the secreted. In terms of biological role, inhibits trypsin. This Sechium edule (Chayote) protein is Trypsin inhibitor 5.